A 526-amino-acid polypeptide reads, in one-letter code: Flavonoid 3'-monooxygenase CYP75B3 (526 aa).

Residues 6 to 26 (LPLLLGSLAVSAAVWYLVYFL) form a helical membrane-spanning segment. Position 461 (Cys461) interacts with heme.

It belongs to the cytochrome P450 family. Heme serves as cofactor.

The protein resides in the membrane. It carries out the reaction a 3'-unsubstituted flavone + reduced [NADPH--hemoprotein reductase] + O2 = a 3'-hydroxyflavone + oxidized [NADPH--hemoprotein reductase] + H2O + H(+). The protein operates within secondary metabolite biosynthesis; flavonoid biosynthesis. Its function is as follows. Catalyzes the 3'-hydroxylation of the flavonoid B-ring to the 3',4'-hydroxylated state. Catalyzes the 3'-hydroxylation of apigenin to generate luteolin. The protein is Flavonoid 3'-monooxygenase CYP75B3 of Oryza sativa subsp. japonica (Rice).